The following is a 380-amino-acid chain: Cytochrome b (380 aa).

4 consecutive transmembrane segments (helical) span residues 34-54, 78-99, 114-134, and 179-199; these read FGSLLGLCLVSQILTGLFLAM, WLLRNLHANGASFMFICLYMHI, WNIGVMLLVLTMATAFLGYVL, and FFAFHFFLPFMIAGLSVVHLL. H84 and H98 together coordinate heme b. Heme b is bound by residues H183 and H197. An a ubiquinone-binding site is contributed by H202. The next 4 helical transmembrane spans lie at 227-247, 289-309, 321-341, and 348-368; these read YKDVVGFVVLLAGLVFIALFS, LGGVVALAMSIVVLFFMPFVH, LAQVLFWLMVVNVLLLTWLGG, and YIFLGQAASVIYFVNILLLIP.

It belongs to the cytochrome b family. In terms of assembly, the cytochrome bc1 complex contains 3 respiratory subunits (MT-CYB, CYC1 and UQCRFS1), 2 core proteins (UQCRC1 and UQCRC2) and probably 6 low-molecular weight proteins. It depends on heme b as a cofactor.

It is found in the mitochondrion inner membrane. Its function is as follows. Component of the ubiquinol-cytochrome c reductase complex (complex III or cytochrome b-c1 complex) that is part of the mitochondrial respiratory chain. The b-c1 complex mediates electron transfer from ubiquinol to cytochrome c. Contributes to the generation of a proton gradient across the mitochondrial membrane that is then used for ATP synthesis. The chain is Cytochrome b (MT-CYB) from Branchiostoma floridae (Florida lancelet).